Here is a 344-residue protein sequence, read N- to C-terminus: 4-hydroxy-3-methylbut-2-en-1-yl diphosphate synthase (flavodoxin) (344 aa).

[4Fe-4S] cluster contacts are provided by cysteine 253, cysteine 256, cysteine 288, and glutamate 295.

This sequence belongs to the IspG family. [4Fe-4S] cluster is required as a cofactor.

It catalyses the reaction (2E)-4-hydroxy-3-methylbut-2-enyl diphosphate + oxidized [flavodoxin] + H2O + 2 H(+) = 2-C-methyl-D-erythritol 2,4-cyclic diphosphate + reduced [flavodoxin]. The protein operates within isoprenoid biosynthesis; isopentenyl diphosphate biosynthesis via DXP pathway; isopentenyl diphosphate from 1-deoxy-D-xylulose 5-phosphate: step 5/6. Its function is as follows. Converts 2C-methyl-D-erythritol 2,4-cyclodiphosphate (ME-2,4cPP) into 1-hydroxy-2-methyl-2-(E)-butenyl 4-diphosphate. This Thermotoga maritima (strain ATCC 43589 / DSM 3109 / JCM 10099 / NBRC 100826 / MSB8) protein is 4-hydroxy-3-methylbut-2-en-1-yl diphosphate synthase (flavodoxin).